The sequence spans 736 residues: Probable methionine--tRNA ligase, cytoplasmic (736 aa).

The 'HIGH' region signature appears at 25 to 35 (PYVNNVPHLGN). The 'KMSKS' region motif lies at 346–350 (KFSKS). Lys-349 is a binding site for ATP. The tRNA-binding domain occupies 573-680 (PEFPIDMKIA…QSIEAGSKIA (108 aa)).

Belongs to the class-I aminoacyl-tRNA synthetase family.

It localises to the cytoplasm. The catalysed reaction is tRNA(Met) + L-methionine + ATP = L-methionyl-tRNA(Met) + AMP + diphosphate. This Dictyostelium discoideum (Social amoeba) protein is Probable methionine--tRNA ligase, cytoplasmic (metS).